The sequence spans 327 residues: Transcription factor bHLH71 (327 aa).

Disordered stretches follow at residues 46–88 (ISEI…NQRM) and 151–176 (AKLNQSVTSSTSQDSNGEQENPHQPS). A compositionally biased stretch (basic residues) spans 65–76 (RGKKRRRRKPRV). The span at 77–88 (CKNEEEAENQRM) shows a compositional bias: basic and acidic residues. The bHLH domain maps to 85 to 136 (NQRMTHIAVERNRRRQMNQHLSVLRSLMPQPFAHKGDQASIVGGAIDFIKEL). A compositionally biased stretch (polar residues) spans 152–169 (KLNQSVTSSTSQDSNGEQ).

As to quaternary structure, homodimer. Interacts with FAMA. As to expression, expressed in leaves, stems, and flowers.

The protein localises to the nucleus. Its function is as follows. Transcription factor. May be involved in the differentiation of stomatal guard cells. The protein is Transcription factor bHLH71 (BHLH71) of Arabidopsis thaliana (Mouse-ear cress).